We begin with the raw amino-acid sequence, 489 residues long: Glycogen synthase (489 aa).

ADP-alpha-D-glucose is bound at residue Lys-15.

It belongs to the glycosyltransferase 1 family. Bacterial/plant glycogen synthase subfamily.

It carries out the reaction [(1-&gt;4)-alpha-D-glucosyl](n) + ADP-alpha-D-glucose = [(1-&gt;4)-alpha-D-glucosyl](n+1) + ADP + H(+). Its pathway is glycan biosynthesis; glycogen biosynthesis. Its function is as follows. Synthesizes alpha-1,4-glucan chains using ADP-glucose. This is Glycogen synthase from Francisella tularensis subsp. novicida (strain U112).